The following is a 426-amino-acid chain: MKRDDLIFDIIEKEHQRQLKGIELIASENFVSDQVMQAMGSCLTNKYAEGYPGKRYYGGCEVVDQSEQIAIDRLKEIFGAEWANVQPHSGAQANAAVFLAVLNPGDKFMGLNLAHGGHLSHGSLVNTSGIIYTPCEYNLNQETGRVDYDQMEEVALREKPKMIIGGGSAYSREWDYKRMREIADKVGAILMIDMAHPAGLIAAGLLENPVKYAHIVTSTTHKTLRGPRGGVIMMGKDFPNPWGKKTPKGEIKMMSQLLDSAVFPGVQGGPLEHVIAAKAVAFGEILQPEYKEYAKQVQKNAAILAQALIDRGFTIVSGGTDNHSMLVDLRSKYPDLTGKVAEKALVSADITVNKNMVPFDSRSAFQTSGIRLGTPAITTRGAKEDLMIEIAEMIETVLSNVENEEVIAQVRARVNETMKKYPLFAD.

(6S)-5,6,7,8-tetrahydrofolate is bound by residues leucine 113 and 117–119 (GHL). At lysine 222 the chain carries N6-(pyridoxal phosphate)lysine. Residue 363–365 (SAF) coordinates (6S)-5,6,7,8-tetrahydrofolate.

The protein belongs to the SHMT family. Homodimer. Pyridoxal 5'-phosphate is required as a cofactor.

The protein localises to the cytoplasm. It carries out the reaction (6R)-5,10-methylene-5,6,7,8-tetrahydrofolate + glycine + H2O = (6S)-5,6,7,8-tetrahydrofolate + L-serine. It participates in one-carbon metabolism; tetrahydrofolate interconversion. Its pathway is amino-acid biosynthesis; glycine biosynthesis; glycine from L-serine: step 1/1. In terms of biological role, catalyzes the reversible interconversion of serine and glycine with tetrahydrofolate (THF) serving as the one-carbon carrier. This reaction serves as the major source of one-carbon groups required for the biosynthesis of purines, thymidylate, methionine, and other important biomolecules. Also exhibits THF-independent aldolase activity toward beta-hydroxyamino acids, producing glycine and aldehydes, via a retro-aldol mechanism. In Bacteroides thetaiotaomicron (strain ATCC 29148 / DSM 2079 / JCM 5827 / CCUG 10774 / NCTC 10582 / VPI-5482 / E50), this protein is Serine hydroxymethyltransferase.